A 166-amino-acid chain; its full sequence is Interleukin-3 (166 aa).

The N-terminal stretch at 1-26 is a signal peptide; that stretch reads MVLASSTTSIHTMLLLLLMLFHLGLQ. N42 carries an N-linked (GlcNAc...) asparagine glycan. 2 cysteine pairs are disulfide-bonded: C43–C106 and C105–C166. An N-linked (GlcNAc...) asparagine; partial glycan is attached at N112. The disordered stretch occupies residues 145–166; that stretch reads LTSRPPQPASGSVSPNRGTVEC.

The protein belongs to the IL-3 family. Monomer. In terms of tissue distribution, activated T-cells, mast cells, natural killer cells.

Its subcellular location is the secreted. Functionally, cytokine secreted predominantly by activated T-lymphocytes as well as mast cells and osteoblastic cells that controls the production and differentiation of hematopoietic progenitor cells into lineage-restricted cells. Also stimulates mature basophils, eosinophils, and monocytes to become functionally activated. In addition, plays an important role in neural cell proliferation and survival. Participates as well in bone homeostasis and inhibits osteoclast differentiation by preventing NF-kappa-B nuclear translocation and activation. Mechanistically, exerts its biological effects through a receptor composed of IL3RA subunit and a signal transducing subunit IL3RB. Receptor stimulation results in the rapid activation of JAK2 kinase activity leading to STAT5-mediated transcriptional program. Alternatively, contributes to cell survival under oxidative stress in non-hematopoietic systems by activating pathways mediated by PI3K/AKT and ERK. The sequence is that of Interleukin-3 (Il3) from Mus musculus (Mouse).